Reading from the N-terminus, the 557-residue chain is CTP synthase (557 aa).

Residues 1 to 270 are amidoligase domain; sequence MTKYVFVTGG…DAIICEELKL (270 aa). Residue S13 participates in CTP binding. S13 lines the UTP pocket. Residues 14 to 19 and D71 contribute to the ATP site; that span reads SLGKGI. Mg(2+)-binding residues include D71 and E144. CTP is bound by residues 151-153, 191-196, and K227; these read DIE and KTKPTQ. Residues 191–196 and K227 contribute to the UTP site; that span reads KTKPTQ. The 253-residue stretch at 295 to 547 folds into the Glutamine amidotransferase type-1 domain; sequence TIGMVGKYVD…VEAALAHQQS (253 aa). Residue G356 participates in L-glutamine binding. C383 (nucleophile; for glutamine hydrolysis) is an active-site residue. Residues 384–387, E407, and R473 contribute to the L-glutamine site; that span reads LGMQ. Residues H520 and E522 contribute to the active site.

This sequence belongs to the CTP synthase family. As to quaternary structure, homotetramer.

It catalyses the reaction UTP + L-glutamine + ATP + H2O = CTP + L-glutamate + ADP + phosphate + 2 H(+). The catalysed reaction is L-glutamine + H2O = L-glutamate + NH4(+). It carries out the reaction UTP + NH4(+) + ATP = CTP + ADP + phosphate + 2 H(+). Its pathway is pyrimidine metabolism; CTP biosynthesis via de novo pathway; CTP from UDP: step 2/2. Its activity is regulated as follows. Allosterically activated by GTP, when glutamine is the substrate; GTP has no effect on the reaction when ammonia is the substrate. The allosteric effector GTP functions by stabilizing the protein conformation that binds the tetrahedral intermediate(s) formed during glutamine hydrolysis. Inhibited by the product CTP, via allosteric rather than competitive inhibition. Its function is as follows. Catalyzes the ATP-dependent amination of UTP to CTP with either L-glutamine or ammonia as the source of nitrogen. Regulates intracellular CTP levels through interactions with the four ribonucleotide triphosphates. In Paraburkholderia xenovorans (strain LB400), this protein is CTP synthase.